Here is a 2110-residue protein sequence, read N- to C-terminus: Protein Ycf2 (2110 aa).

An ATP-binding site is contributed by 1336 to 1343; that stretch reads GSIGTGRS. Residues 1852–1876 form a disordered region; that stretch reads EEEAELQDEEAELQDEGAGRKDEEA. Residues 1854-1866 are compositionally biased toward acidic residues; sequence EAELQDEEAELQD.

It belongs to the Ycf2 family.

It is found in the plastid. Its subcellular location is the chloroplast stroma. In terms of biological role, probable ATPase of unknown function. Its presence in a non-photosynthetic plant (Epifagus virginiana) and experiments in tobacco indicate that it has an essential function which is probably not related to photosynthesis. The sequence is that of Protein Ycf2 (ycf2-A) from Pelargonium hortorum (Common geranium).